The chain runs to 376 residues: Neuropeptide receptor 3 (376 aa).

The Extracellular segment spans residues 1 to 29 (MEGGRNCVMTVQQWQPEYNDMNQIRAIFS). Residues 30-50 (LLYLLVWVGAIVGNTLVLYVL) traverse the membrane as a helical segment. At 51 to 66 (TFNQVSLSVRTVFVGC) the chain is on the cytoplasmic side. A helical membrane pass occupies residues 67–87 (LAGSDLLMCLFSLPITAISIF). Residues 88–89 (SR) are Extracellular-facing. A helical membrane pass occupies residues 90–110 (VWVFPAIFCKLIGVFQGGTIF). Cys98 and Cys175 are joined by a disulfide. At 111 to 139 (VSSFTLTVIALDRCVLILRPNQEIVNFPR) the chain is on the cytoplasmic side. The helical transmembrane segment at 140–160 (AVFIVFCIWLLGYSLALPVGI) threads the bilayer. The Extracellular portion of the chain corresponds to 161–197 (YSDIAVYDEICGTFCEENWPDFNPDTGRSGIRRAYGL). The helical transmembrane segment at 198-218 (SVLVLQFGIPALISSICYWMI) threads the bilayer. The Cytoplasmic portion of the chain corresponds to 219 to 251 (SRVMSDQLARRRGHNIRPESETKLVNRKTRANR). A helical transmembrane segment spans residues 252-272 (MMIVMVVGFVLAWMPFNAVNL). Residues 273-284 (YRDLFGISKWYS) lie on the Extracellular side of the membrane. The chain crosses the membrane as a helical span at residues 285–305 (TVFALCHVCAMCSAVLNPIIY). The Cytoplasmic segment spans residues 306–376 (SWFNPQFRQS…NDYRAGDQLL (71 aa)).

This sequence belongs to the G-protein coupled receptor 1 family.

The protein resides in the cell membrane. In terms of biological role, G-protein coupled receptor for flp-15 neuropeptides. Receptor activation assays suggest binding to predicted flp-15 peptides, GGPQGPLRF-NH2 and RGPSGPLRF-NH2. Likely involved in Gi/Go-coupled signaling pathways. The protein is Neuropeptide receptor 3 of Caenorhabditis elegans.